Consider the following 522-residue polypeptide: ATP synthase subunit alpha 2 (522 aa).

ATP is bound at residue Gly176 to Thr183.

It belongs to the ATPase alpha/beta chains family. As to quaternary structure, F-type ATPases have 2 components, CF(1) - the catalytic core - and CF(0) - the membrane proton channel. CF(1) has five subunits: alpha(3), beta(3), gamma(1), delta(1), epsilon(1). CF(0) has three main subunits: a(1), b(2) and c(9-12). The alpha and beta chains form an alternating ring which encloses part of the gamma chain. CF(1) is attached to CF(0) by a central stalk formed by the gamma and epsilon chains, while a peripheral stalk is formed by the delta and b chains.

It is found in the cell inner membrane. The enzyme catalyses ATP + H2O + 4 H(+)(in) = ADP + phosphate + 5 H(+)(out). Produces ATP from ADP in the presence of a proton gradient across the membrane. The alpha chain is a regulatory subunit. The chain is ATP synthase subunit alpha 2 from Syntrophotalea carbinolica (strain DSM 2380 / NBRC 103641 / GraBd1) (Pelobacter carbinolicus).